The primary structure comprises 503 residues: Poxin-Schlafen (503 aa).

The poxin-like stretch occupies residues Met1–Leu236. His15 functions as the Proton donor in the catalytic mechanism. The active-site Shared with catalytic histidine of dimeric partner is Tyr136. Residue Lys140 is the Proton acceptor; shared with catalytic histidine of dimeric partner of the active site. The interval Met237 to Phe503 is schlafen-like.

It in the N-terminal section; belongs to the poxin family. This sequence in the C-terminal section; belongs to the Schlafen protein family. Subgroup poxviridae B3 subfamily. In terms of assembly, homodimer.

The catalysed reaction is 2',3'-cGAMP + H2O = Gp(2'-5')Ap(3') + H(+). Nuclease that is responsible for viral evasion of host cGAS-STING innate immunity. Cleaves 2',3'-cGAMP which is produced by host cGAS following recognition of intracellular foreign DNA and blocks the subsequent 2',3'-cGAMP-mediated activation of TMEM173/STING which normally spreads to adjacent cells and activates the interferon and NF-kappa-B immune responses. The protein is Poxin-Schlafen (OPG188) of Cynomys gunnisoni (Gunnison's prairie dog).